A 1481-amino-acid chain; its full sequence is Cystic fibrosis transmembrane conductance regulator (1481 aa).

At 1 to 77 the chain is on the cytoplasmic side; that stretch reads MQKSPLEKAG…KLINALRRCF (77 aa). A helical transmembrane segment spans residues 78–98; sequence FWRFMFYGILLYLGEVTKAVQ. The ABC transmembrane type-1 1 domain occupies 81 to 365; it reads FMFYGILLYL…WAVQTWYDSL (285 aa). Residues 99–122 are Extracellular-facing; it reads PLLLGRIIASYDPDNKVERSIAIY. The helical transmembrane segment at 123–146 threads the bilayer; the sequence is LGIGLCLLFVVRTLLLHPAIFGLH. Residues 147–195 lie on the Cytoplasmic side of the membrane; the sequence is HIGMQMRIAMFSLIYKKTLKLSSRVLDKISIGQLISLLSNNLNKFDEGL. Residues 196 to 216 traverse the membrane as a helical segment; it reads ALAHFVWISPLQVTLLMGLLW. The Extracellular portion of the chain corresponds to 217–222; that stretch reads ELLQAS. Residues 223–243 form a helical membrane-spanning segment; it reads AFCGLAFLIVLALVQAGLGRM. Residues 244–298 lie on the Cytoplasmic side of the membrane; sequence MMKYRDQRAGKINERLVITSEMIENIQSVKAYCWEEAMEKMIENLRQTELKLTRK. Residues 299-319 form a helical membrane-spanning segment; it reads AAYVRYFNSSAFFFSGFFVVF. The Extracellular portion of the chain corresponds to 320-339; that stretch reads LSVLPYALTKGIILRKIFTT. Residues 340-358 form a helical membrane-spanning segment; that stretch reads ISFCIVLRMAVTRQFPWAV. Over 359-858 the chain is Cytoplasmic; it reads QTWYDSLGAI…YLRYITVHRS (500 aa). ATP contacts are provided by residues W401, S434, 458–465, and Q493; that span reads GSTGAGKT. Residues 423 to 646 form the ABC transporter 1 domain; that stretch reads NGDNNLFFSN…RPDFSSKLMG (224 aa). C524 carries S-palmitoyl cysteine lipidation. S549 and S660 each carry phosphoserine. The segment at 654-831 is disordered R region; the sequence is SAERRNSILT…EEINEEDLKE (178 aa). S670 carries the phosphoserine; by PKA modification. A Phosphoserine modification is found at S686. Residue K688 forms a Glycyl lysine isopeptide (Lys-Gly) (interchain with G-Cter in ubiquitin) linkage. Residues S700 and S712 each carry the phosphoserine modification. T717 is modified (phosphothreonine). 5 positions are modified to phosphoserine: S737, S768, S790, S795, and S813. A helical membrane pass occupies residues 859 to 879; sequence LIFVLIWCIVIFLAEVAASLV. An ABC transmembrane type-1 2 domain is found at 859-1155; it reads LIFVLIWCIV…AVNSSIDVDS (297 aa). Topologically, residues 880 to 918 are extracellular; sequence VLWLFGNTAPQDKENSTKSGNSSYAVIITNTSSYYFFYI. 3 N-linked (GlcNAc...) asparagine glycosylation sites follow: N894, N900, and N909. A discontinuously helical membrane pass occupies residues 919–939; it reads YVGVADTLLALGLFRGLPLVH. Residues 940 to 990 lie on the Cytoplasmic side of the membrane; it reads TLITVSKILHHKMLHSVLQAPMSTLNTLKAGGILNRFSKDIAILDDLLPLT. A helical transmembrane segment spans residues 991–1011; the sequence is IFDFIQLLLIVVGAIAVVSVL. The Extracellular portion of the chain corresponds to 1012-1013; the sequence is QP. A helical transmembrane segment spans residues 1014–1034; the sequence is YIFLATVPVIAAFILLRAYFL. The Cytoplasmic portion of the chain corresponds to 1035-1095; that stretch reads HTSQQLKQLE…TANWFLYLST (61 aa). Residues 1096–1116 traverse the membrane as a helical segment; sequence LRWFQMRIEMIFVLFFIAVAF. Over 1117–1130 the chain is Extracellular; that stretch reads ISILTTGEGEGRVG. A helical membrane pass occupies residues 1131–1151; that stretch reads IILTLAMNIMSTLQWAVNSSI. The Cytoplasmic segment spans residues 1152–1481; sequence DVDSLMRSVS…AEEEVQGTRL (330 aa). The ABC transporter 2 domain maps to 1199–1444; it reads VKKDDVWPSG…KSLFRQAISS (246 aa). Residues Y1220 and 1245-1252 each bind ATP; that span reads GRTGSGKS. Residues 1387–1481 form an interaction with GORASP2 region; the sequence is RTLKQAFADC…AEEEVQGTRL (95 aa). The S-palmitoyl cysteine moiety is linked to residue C1396. S1445 and S1457 each carry phosphoserine. The interval 1449–1481 is disordered; sequence KLFPHRNSSKHKSRPQITALKEEAEEEVQGTRL. Residues 1450–1462 are compositionally biased toward basic residues; that stretch reads LFPHRNSSKHKSR. The segment covering 1471-1481 has biased composition (acidic residues); sequence EAEEEVQGTRL. The PDZ-binding signature appears at 1479–1481; the sequence is TRL.

The protein belongs to the ABC transporter superfamily. ABCC family. CFTR transporter (TC 3.A.1.202) subfamily. Monomer; does not require oligomerization for channel activity. May form oligomers in the membrane. Interacts with SLC26A3, SLC26A6 and NHERF1. Interacts with SHANK2. Interacts with MYO6. Interacts (via C-terminus) with GOPC (via PDZ domain); this promotes CFTR internalization and thereby decreases channel activity. Interacts with SLC4A7 through NHERF1. Found in a complex with MYO5B and RAB11A. Interacts with ANO1. Interacts with SLC26A8. Interacts with AHCYL1; the interaction increases CFTR activity. Interacts with CSE1L. The core-glycosylated form interacts with GORASP2 (via PDZ GRASP-type 1 domain) in respone to ER stress. Interacts with MARCHF2; the interaction leads to CFTR ubiqtuitination and degradation. Interacts with ADGRG2. In terms of processing, N-glycosylated. Phosphorylated; cAMP treatment promotes phosphorylation and activates the channel. Dephosphorylation decreases the ATPase activity (in vitro). Phosphorylation at PKA sites activates the channel. Phosphorylation at PKC sites enhances the response to phosphorylation by PKA. Phosphorylated by AMPK; this inhibits channel activity. Post-translationally, ubiquitinated, leading to its degradation in the lysosome. Deubiquitination by USP10 in early endosomes enhances its endocytic recycling to the cell membrane. Ubiquitinated by RNF185 during ER stress. Ubiquitinated by MARCHF2. Isoform 1 is expressed in the pancreas. Isoform 2 is specifically expressed in the ventricle.

It localises to the apical cell membrane. Its subcellular location is the early endosome membrane. The protein resides in the cell membrane. The protein localises to the recycling endosome membrane. It is found in the endoplasmic reticulum membrane. It localises to the nucleus. The enzyme catalyses ATP + H2O + closed Cl(-) channel = ADP + phosphate + open Cl(-) channel.. It catalyses the reaction chloride(in) = chloride(out). It carries out the reaction hydrogencarbonate(in) = hydrogencarbonate(out). The catalysed reaction is ATP + H2O = ADP + phosphate + H(+). Functionally, epithelial ion channel that plays an important role in the regulation of epithelial ion and water transport and fluid homeostasis. Mediates the transport of chloride ions across the cell membrane. Possesses an intrinsic ATPase activity and utilizes ATP to gate its channel; the passive flow of anions through the channel is gated by cycles of ATP binding and hydrolysis by the ATP-binding domains. The ion channel is also permeable to HCO(3)(-); selectivity depends on the extracellular chloride concentration. Exerts its function also by modulating the activity of other ion channels and transporters. Contributes to the regulation of the pH and the ion content of the epithelial fluid layer. Modulates the activity of the epithelial sodium channel (ENaC) complex, in part by regulating the cell surface expression of the ENaC complex. May regulate bicarbonate secretion and salvage in epithelial cells by regulating the transporter SLC4A7. Can inhibit the chloride channel activity of ANO1. Plays a role in the chloride and bicarbonate homeostasis during sperm epididymal maturation and capacitation. This Oryctolagus cuniculus (Rabbit) protein is Cystic fibrosis transmembrane conductance regulator.